A 696-amino-acid polypeptide reads, in one-letter code: Rho-related BTB domain-containing protein 1 (696 aa).

A rho-like region spans residues 1 to 210 (MDADMDYERP…DNAIRAALIS (210 aa)). Residues 21–28 (GDNAVGKT), 84–88 (DTFGD), and 140–143 (CQLD) each bind GTP. BTB domains lie at 266-427 (ADVL…DEKE) and 485-552 (SDVT…SPNL). The disordered stretch occupies residues 327–348 (VDPEEEREEGPPRIPQADQWKS).

This sequence belongs to the small GTPase superfamily. Rho family. As to expression, ubiquitous, with highest levels in skeletal muscle, placenta, testis, stomach, and kidney, followed by uterus and adrenal gland. Expressed in a variety of fetal tissues.

The protein is Rho-related BTB domain-containing protein 1 (RHOBTB1) of Homo sapiens (Human).